The following is a 131-amino-acid chain: MSALKYCLLVTGPAYGTQQASSAYQFAQAVVGAGHHLVSIFFYREGVLNANQLTAPASDEFDLVRAWQQLAAEQAVTLNVCVAAALRRGITDQHEAEQLNLAAANLQPGFTLSGLGALAEATLTCDRMVQF.

The active-site Cysteine persulfide intermediate is the cysteine 81.

This sequence belongs to the DsrE/TusD family. Heterohexamer, formed by a dimer of trimers. The hexameric TusBCD complex contains 2 copies each of TusB, TusC and TusD. The TusBCD complex interacts with TusE.

The protein resides in the cytoplasm. In terms of biological role, part of a sulfur-relay system required for 2-thiolation of 5-methylaminomethyl-2-thiouridine (mnm(5)s(2)U) at tRNA wobble positions. Accepts sulfur from TusA and transfers it in turn to TusE. This Yersinia pseudotuberculosis serotype O:1b (strain IP 31758) protein is Sulfurtransferase TusD.